The sequence spans 357 residues: N-methyltransferase dtpB (357 aa).

It belongs to the methyltransferase superfamily.

The protein operates within alkaloid biosynthesis. N-methyltransferase; part of the gene cluster that mediates the biosynthesis of the dimeric diketopiperazine alkaloid ditryptophenaline. The nonribosomal peptide synthase dtpA accepts L-tryptophan and L-phenylalanine as its substrates and forms the phenylalanyl-tryptophanyl cyclic dipeptide product cyclophenylalanyltryptophenyl. The N-methyltransferase dtpB is responsible for the N-methylation of cyclophenylalanyltryptophenyl to yield cyclo-N-methylphenylalanyltryptophenyl. The cytochrome P450 monooxygenase is responsible not only for pyrroloindole ring formation but also for concurrent dimerization of N-methylphenylalanyltryptophanyl diketopiperazine monomers into a homodimeric product. In Aspergillus flavus (strain ATCC 200026 / FGSC A1120 / IAM 13836 / NRRL 3357 / JCM 12722 / SRRC 167), this protein is N-methyltransferase dtpB.